The following is a 355-amino-acid chain: Vacuolar protein sorting-associated protein 37C (355 aa).

S29 bears the Phosphoserine mark. In terms of domain architecture, VPS37 C-terminal spans 78–167; that stretch reads VERCQEQKAK…RKPRASQELA (90 aa). The segment at 159–355 is disordered; the sequence is KPRASQELAG…PPPGPAWPGY (197 aa). Composition is skewed to pro residues over residues 170–186 and 194–214; these read APPP…PQGT and PQPP…PSLP. Over residues 291-304 the composition is skewed to low complexity; that stretch reads APSPGYPQQSPYPA. Positions 321–355 are enriched in pro residues; it reads PGQPQPSVPLQPPYPPGPAPPYGFPPPPGPAWPGY.

The protein belongs to the VPS37 family. In terms of assembly, component of the ESCRT-I complex (endosomal sorting complex required for transport I) which consists of TSG101, VPS28, a VPS37 protein (VPS37A to -D) and MVB12A or MVB12B in a 1:1:1:1 stoichiometry. Interacts with TSG101, VPS28, MVB12A and MVB12B. Component of the ESCRT-I complex (endosomal sorting complex required for transport I) which consists of TSG101, VPS28, a VPS37 protein (VPS37A to -D) and UBAP1 in a 1:1:1:1 stoichiometry. Interacts with HGS and STAM2. Interacts with CEP55. In terms of processing, phosphorylated by TBK1.

It is found in the late endosome membrane. Component of the ESCRT-I complex, a regulator of vesicular trafficking process. Required for the sorting of endocytic ubiquitinated cargos into multivesicular bodies. May be involved in cell growth and differentiation. This is Vacuolar protein sorting-associated protein 37C (VPS37C) from Homo sapiens (Human).